The sequence spans 445 residues: Glutamate-1-semialdehyde 2,1-aminomutase (445 aa).

K264 bears the N6-(pyridoxal phosphate)lysine mark.

This sequence belongs to the class-III pyridoxal-phosphate-dependent aminotransferase family. HemL subfamily. It depends on pyridoxal 5'-phosphate as a cofactor.

It is found in the cytoplasm. The catalysed reaction is (S)-4-amino-5-oxopentanoate = 5-aminolevulinate. Its pathway is porphyrin-containing compound metabolism; protoporphyrin-IX biosynthesis; 5-aminolevulinate from L-glutamyl-tRNA(Glu): step 2/2. The protein is Glutamate-1-semialdehyde 2,1-aminomutase of Halobacterium salinarum (strain ATCC 29341 / DSM 671 / R1).